The chain runs to 177 residues: MSRVGKLPITIPEGVKVGLNDLEVKISGPKGELSKTFKGNIAIIMEENKLVVKPLAVNKNARSMWGTARSIIYNMVTGVKEGFKLKLEINGVGYRAMVKGKYLNLMLAKSHNTKIEIPSNIKIDLPKQNIILLEGIDKEKLGQFASIIIKQRPPEPYKGKGIKFENKFIQRKEGKKN.

Belongs to the universal ribosomal protein uL6 family. Part of the 50S ribosomal subunit.

In terms of biological role, this protein binds to the 23S rRNA, and is important in its secondary structure. It is located near the subunit interface in the base of the L7/L12 stalk, and near the tRNA binding site of the peptidyltransferase center. The chain is Large ribosomal subunit protein uL6 from Rickettsia typhi (strain ATCC VR-144 / Wilmington).